A 353-amino-acid chain; its full sequence is Nicotinate-nucleotide--dimethylbenzimidazole phosphoribosyltransferase (353 aa).

Catalysis depends on glutamate 319, which acts as the Proton acceptor.

Belongs to the CobT family.

It carries out the reaction 5,6-dimethylbenzimidazole + nicotinate beta-D-ribonucleotide = alpha-ribazole 5'-phosphate + nicotinate + H(+). The protein operates within nucleoside biosynthesis; alpha-ribazole biosynthesis; alpha-ribazole from 5,6-dimethylbenzimidazole: step 1/2. Catalyzes the synthesis of alpha-ribazole-5'-phosphate from nicotinate mononucleotide (NAMN) and 5,6-dimethylbenzimidazole (DMB). This chain is Nicotinate-nucleotide--dimethylbenzimidazole phosphoribosyltransferase, found in Prosthecochloris aestuarii (strain DSM 271 / SK 413).